The following is a 35-amino-acid chain: Pheromone-binding protein 2 (35 aa).

This sequence belongs to the PBP/GOBP family. In terms of assembly, homodimer. Antenna.

In terms of biological role, this major soluble protein in olfactory sensilla of male moths might serve to solubilize the extremely hydrophobic pheromone molecules and to transport pheromone through the aqueous lymph to receptors located on olfactory cilia. In Lymantria dispar (Gypsy moth), this protein is Pheromone-binding protein 2.